The primary structure comprises 344 residues: MATRKESTSTPTAPMASTSPGATLDSPVKQIQIEGLVVLKMIKHYQEEGQGSEVVQGVLLGLVVEDRLEITNCFPFPQHTEDDADFDEVQYQMEMMRSLRHVNIDHLHVGWYQSTYYGSFVSRALLDSQFSYQHAIEESVVLIYDPIKTAQGSLSLKAYRLTPKLMEICKEKDFSAEGLKKAMIGFEHMFEEVPIVIKNSHLINVLMWELEEKCTVADKHELLNLSSSNHLEKSLQLLMDRVDDMSQDIVKYNTYSRNLSKQQQQKHQYTQRRQQENAQRQTRGETPLPEEDVSKMFKPPQPPPRMDTLLIAGQINNYCQNVKEFTSQNLGKLFMAEALQGHNS.

Residues 1-24 are disordered; sequence MATRKESTSTPTAPMASTSPGATL. Over residues 8–23 the composition is skewed to low complexity; it reads TSTPTAPMASTSPGAT. The 135-residue stretch at 31 to 165 folds into the MPN domain; sequence IQIEGLVVLK…LKAYRLTPKL (135 aa). Residues 256–305 are disordered; that stretch reads SRNLSKQQQQKHQYTQRRQQENAQRQTRGETPLPEEDVSKMFKPPQPPPR. Positions 261-272 are enriched in low complexity; it reads KQQQQKHQYTQR.

Belongs to the eIF-3 subunit H family. Component of the eukaryotic translation initiation factor 3 (eIF-3) complex, which is composed of 13 subunits: eif3a, eif3b, eif3c, eif3d, eif3e, eif3f, eif3g, eif3h, eif3i, eif3j, eif3k, eif3l and eif3m.

The protein resides in the cytoplasm. In terms of biological role, component of the eukaryotic translation initiation factor 3 (eIF-3) complex, which is involved in protein synthesis of a specialized repertoire of mRNAs and, together with other initiation factors, stimulates binding of mRNA and methionyl-tRNAi to the 40S ribosome. The eIF-3 complex specifically targets and initiates translation of a subset of mRNAs involved in cell proliferation. This Salmo salar (Atlantic salmon) protein is Eukaryotic translation initiation factor 3 subunit H (eif3h).